Consider the following 1029-residue polypeptide: Translation initiation factor IF-2 (1029 aa).

Residues 73–441 (RELRSEEDDG…RQRRRERKRE (369 aa)) form a disordered region. Acidic residues-rich tracts occupy residues 106–121 (TAEE…DEEE) and 148–177 (AEAE…DEAE). Positions 183-196 (AADKDAAAIADEQK) are enriched in basic and acidic residues. Acidic residues-rich tracts occupy residues 213 to 234 (TGEE…DAEA), 242 to 258 (TEAE…AEDV), and 279 to 322 (APDE…DEEG). A compositionally biased stretch (basic and acidic residues) spans 358 to 372 (KDKDKDKSSKKDKKD). The span at 373–386 (KSNKKSKSKGKKQK) shows a compositional bias: basic residues. Residues 400 to 411 (QTLQETLQELEQ) show a composition bias toward low complexity. Positions 417 to 427 (RQRRRRRRRKR) are enriched in basic residues. Residues 428-441 (HEEERQRRRERKRE) are compositionally biased toward basic and acidic residues. In terms of domain architecture, tr-type G spans 524 to 696 (PRAPVVTVMG…LLQSEIMELK (173 aa)). The tract at residues 533–540 (GHVDHGKT) is G1. 533 to 540 (GHVDHGKT) serves as a coordination point for GTP. The G2 stretch occupies residues 558–562 (GITQH). A G3 region spans residues 582 to 585 (DTPG). GTP-binding positions include 582 to 586 (DTPGH) and 636 to 639 (NKMD). The segment at 636-639 (NKMD) is G4. Positions 672–674 (SAK) are G5.

This sequence belongs to the TRAFAC class translation factor GTPase superfamily. Classic translation factor GTPase family. IF-2 subfamily.

Its subcellular location is the cytoplasm. In terms of biological role, one of the essential components for the initiation of protein synthesis. Protects formylmethionyl-tRNA from spontaneous hydrolysis and promotes its binding to the 30S ribosomal subunits. Also involved in the hydrolysis of GTP during the formation of the 70S ribosomal complex. This Salinibacter ruber (strain DSM 13855 / M31) protein is Translation initiation factor IF-2.